Reading from the N-terminus, the 209-residue chain is Shikimate kinase (209 aa).

47 to 52 (GAGKTT) is an ATP binding site. T51 provides a ligand contact to Mg(2+). 3 residues coordinate substrate: D69, R93, and G115. Position 153 (R153) interacts with ATP. R172 serves as a coordination point for substrate.

This sequence belongs to the shikimate kinase family. In terms of assembly, monomer. The cofactor is Mg(2+).

The protein resides in the cytoplasm. It catalyses the reaction shikimate + ATP = 3-phosphoshikimate + ADP + H(+). The protein operates within metabolic intermediate biosynthesis; chorismate biosynthesis; chorismate from D-erythrose 4-phosphate and phosphoenolpyruvate: step 5/7. In terms of biological role, catalyzes the specific phosphorylation of the 3-hydroxyl group of shikimic acid using ATP as a cosubstrate. This is Shikimate kinase from Bordetella avium (strain 197N).